A 468-amino-acid polypeptide reads, in one-letter code: Zinc finger protein mex-5 (468 aa).

A compositionally biased stretch (low complexity) spans 1–19 (MKAASNSVSSAGGSVSPTT). Positions 1–32 (MKAASNSVSSAGGSVSPTTTQPPLPPGQSSHP) are disordered. The residue at position 186 (Thr186) is a Phosphothreonine; by mbk-2. The segment covering 243 to 254 (NHFHEHRGEKFG) has biased composition (basic and acidic residues). A disordered region spans residues 243–269 (NHFHEHRGEKFGRRGFPIPETDSQQPP). C3H1-type zinc fingers lie at residues 270 to 299 (NYKTRLCMMHASGIKPCDMGARCKFAHGLK) and 314 to 344 (KYKTKLCKNFARGGTGFCPYGLRCEFVHPTD). The interval 414-468 (DLQAGGDYNQPESNEDDLPPHLRRNRRENPPMNKRRTSLSTKWTSEENLGLRGHY) is disordered. Polar residues predominate over residues 451-460 (SLSTKWTSEE). At Ser458 the chain carries Phosphoserine.

In terms of assembly, interacts (when phosphorylated on Thr-186) with plk-1 (via POLO box domain) and plk-2 (via POLO box domain). Post-translationally, phosphorylation on Ser-458 by par-1 promotes localization of the protein to the anterior cytoplasm of the zygote. Phosphorylation by mbk-1 appears to be required for subsequent phosphorylation by plk-1. In terms of tissue distribution, asymmetrically localized to the anterior of the zygote before mitotic division, then differentially distributed to the somatic blastomere precursor cells.

The protein localises to the cytoplasm. Functions with mex-6 to affect embryonic viability, establish soma germline asymmetry in embryos and establish plk-1, pie-1, mex-1, and pos-1 asymmetry in embryos. Also affects formation of intestinal cells. Binds to mRNA in vitro, and inhibits pgl-3-mediated P-granule formation, probably by competing with pgl-3 for binding to mRNA. Required for neg-1 expression in anterior blastomeres during embryogenesis. The sequence is that of Zinc finger protein mex-5 from Caenorhabditis elegans.